A 604-amino-acid polypeptide reads, in one-letter code: Glutamine--fructose-6-phosphate aminotransferase [isomerizing] (604 aa).

C2 acts as the Nucleophile; for GATase activity in catalysis. One can recognise a Glutamine amidotransferase type-2 domain in the interval 2 to 218; the sequence is CGIVGVVGNR…DKELVILTKD (217 aa). SIS domains lie at 284 to 423 and 456 to 594; these read IITS…ANGK and VQAL…VDKP. K599 serves as the catalytic For Fru-6P isomerization activity.

In terms of assembly, homodimer.

It is found in the cytoplasm. The catalysed reaction is D-fructose 6-phosphate + L-glutamine = D-glucosamine 6-phosphate + L-glutamate. Functionally, catalyzes the first step in hexosamine metabolism, converting fructose-6P into glucosamine-6P using glutamine as a nitrogen source. This Streptococcus pyogenes serotype M1 protein is Glutamine--fructose-6-phosphate aminotransferase [isomerizing].